The chain runs to 821 residues: DNA replication licensing factor MCM6 (821 aa).

Met-1 bears the N-acetylmethionine mark. Phosphoserine is present on residues Ser-13, Ser-219, and Ser-271. Thr-278 is subject to Phosphothreonine. Positions 346 to 553 (LYHNLCTSLF…TDYAIARRIV (208 aa)) constitute an MCM domain. Residues His-359, Ser-399, Thr-400, Ala-401, Lys-402, Ser-403, and Asn-504 each coordinate ATP. The short motif at 528-531 (SRFD) is the Arginine finger element. ADP contacts are provided by Arg-619 and Glu-622. Lys-643 is modified (N6-acetyllysine). Residues 676–706 (VDEGPDGINGHADSPAPASGINGHSEDMNQD) form a disordered region. Residues Ser-689 and Ser-762 each carry the phosphoserine modification. Phosphothreonine is present on Thr-791.

This sequence belongs to the MCM family. In terms of assembly, component of the MCM2-7 complex. The complex forms a toroidal hexameric ring with the proposed subunit order MCM2-MCM6-MCM4-MCM7-MCM3-MCM5. Component of the CMG helicase complex, a hexameric ring of related MCM2-7 subunits stabilized by CDC45 and the tetrameric GINS complex. May interact with MCM10. Interacts with TIPIN. Interacts with CDT1. Interacts with MCMBP. Interacts with DDI2. Post-translationally, O-glycosylated (O-GlcNAcylated), in a cell cycle-dependent manner.

The protein resides in the nucleus. It localises to the chromosome. The enzyme catalyses ATP + H2O = ADP + phosphate + H(+). In terms of biological role, acts as a component of the MCM2-7 complex (MCM complex) which is the replicative helicase essential for 'once per cell cycle' DNA replication initiation and elongation in eukaryotic cells. Core component of CDC45-MCM-GINS (CMG) helicase, the molecular machine that unwinds template DNA during replication, and around which the replisome is built. The active ATPase sites in the MCM2-7 ring are formed through the interaction surfaces of two neighboring subunits such that a critical structure of a conserved arginine finger motif is provided in trans relative to the ATP-binding site of the Walker A box of the adjacent subunit. The six ATPase active sites, however, are likely to contribute differentially to the complex helicase activity. In Bos taurus (Bovine), this protein is DNA replication licensing factor MCM6 (MCM6).